The sequence spans 263 residues: 3'-5' ssDNA/RNA exonuclease TatD (263 aa).

A divalent metal cation is bound by residues glutamate 91, histidine 127, and histidine 152.

The protein belongs to the metallo-dependent hydrolases superfamily. TatD-type hydrolase family. TatD subfamily. Monomer. It depends on Mg(2+) as a cofactor.

It is found in the cytoplasm. Functionally, 3'-5' exonuclease that prefers single-stranded DNA and RNA. May play a role in the H(2)O(2)-induced DNA damage repair. In Klebsiella pneumoniae (strain 342), this protein is 3'-5' ssDNA/RNA exonuclease TatD.